Consider the following 247-residue polypeptide: Neurotrophic factor BDNF precursor form (247 aa).

The N-terminal stretch at 1-18 is a signal peptide; the sequence is MTILFLTMVISYFGCMKA. A propeptide spanning residues 19–128 is cleaved from the precursor; it reads APMKEANARG…AANMSMRVRR (110 aa). Asn-121 carries N-linked (GlcNAc...) asparagine glycosylation. Intrachain disulfides connect Cys-141/Cys-208, Cys-186/Cys-237, and Cys-196/Cys-239.

This sequence belongs to the NGF-beta family. As to quaternary structure, monomers and homodimers. Binds to NTRK2/TRKB. Can form heterodimers with other neurotrophin family members, such as NTF3 and NTF4 (in vitro), but the physiological relevance of this is not clear. BDNF precursor form: interacts with the heterodimer formed by NGFR and SORCS2. Mature BDNF has much lower affinity for the heterodimer formed by NGFR and SORCS2. N-glycosylated and glycosulfated, contrary to mature BDNF. Post-translationally, mature BDNF is produced by proteolytic removal of the propeptide, catalyzed by a FURIN family member. In addition, the precursor form is proteolytically cleaved within the propeptide, but this is not an obligatory intermediate for the production of mature BDNF. Can be converted into mature BDNF by plasmin (PLG).

It is found in the secreted. Functionally, important signaling molecule that activates signaling cascades downstream of NTRK2. During development, promotes the survival and differentiation of selected neuronal populations of the peripheral and central nervous systems. Participates in axonal growth, pathfinding and in the modulation of dendritic growth and morphology. Major regulator of synaptic transmission and plasticity at adult synapses in many regions of the CNS. The versatility of BDNF is emphasized by its contribution to a range of adaptive neuronal responses including long-term potentiation (LTP), long-term depression (LTD), certain forms of short-term synaptic plasticity, as well as homeostatic regulation of intrinsic neuronal excitability. Important signaling molecule that activates signaling cascades downstream of NTRK2. Activates signaling cascades via the heterodimeric receptor formed by NGFR and SORCS2. Signaling via NGFR and SORCS2 plays a role in synaptic plasticity and long-term depression (LTD). Binding to NGFR and SORCS2 promotes neuronal apoptosis. Promotes neuronal growth cone collapse. The protein is Neurotrophic factor BDNF precursor form (BDNF) of Equus caballus (Horse).